The sequence spans 301 residues: NAD kinase (301 aa).

Residue aspartate 73 is the Proton acceptor of the active site. NAD(+) is bound by residues 73-74 (DG), 151-152 (ND), arginine 179, aspartate 181, 192-197 (TAYALS), alanine 216, and glutamine 250.

This sequence belongs to the NAD kinase family. It depends on a divalent metal cation as a cofactor.

Its subcellular location is the cytoplasm. It catalyses the reaction NAD(+) + ATP = ADP + NADP(+) + H(+). In terms of biological role, involved in the regulation of the intracellular balance of NAD and NADP, and is a key enzyme in the biosynthesis of NADP. Catalyzes specifically the phosphorylation on 2'-hydroxyl of the adenosine moiety of NAD to yield NADP. This is NAD kinase from Methylibium petroleiphilum (strain ATCC BAA-1232 / LMG 22953 / PM1).